The chain runs to 385 residues: Cytochrome b (385 aa).

The next 4 membrane-spanning stretches (helical) occupy residues 32 to 52 (FGSL…TLAM), 76 to 98 (WLVR…LHIG), 113 to 133 (TWAI…LGYV), and 179 to 199 (FFAL…MHLI). Heme b-binding residues include H82 and H96. 2 residues coordinate heme b: H183 and H197. An a ubiquinone-binding site is contributed by H202. The next 4 membrane-spanning stretches (helical) occupy residues 226 to 246 (FVFK…IFVF), 290 to 310 (LLGV…PITD), 322 to 342 (LSKV…QIGA), and 349 to 369 (FIEF…VIVP).

This sequence belongs to the cytochrome b family. Fungal cytochrome b-c1 complex contains 10 subunits; 3 respiratory subunits, 2 core proteins and 5 low-molecular weight proteins. Cytochrome b-c1 complex is a homodimer. The cofactor is heme b.

It is found in the mitochondrion inner membrane. Component of the ubiquinol-cytochrome c reductase complex (complex III or cytochrome b-c1 complex) that is part of the mitochondrial respiratory chain. The b-c1 complex mediates electron transfer from ubiquinol to cytochrome c. Contributes to the generation of a proton gradient across the mitochondrial membrane that is then used for ATP synthesis. The polypeptide is Cytochrome b (cob) (Aspergillus terreus (strain NIH 2624 / FGSC A1156)).